We begin with the raw amino-acid sequence, 415 residues long: MPTWTEYIFQRKLGRAPSPGDVVEVVPDLVGFHDLTGYHVLEVLESMGKVEVFDKGRVVVAFDHLSPPPTQRAAEIMVYIRKHVKALGLPNFYDVGGGILHQIILEKYAMPEYVIFAADSHTNTAGAVGAFAHGMGATDIAAALKLGRTWVVVPAPFRVDVRGEFPPGVMGKDVALHLLKQFGAEGFNGYSVEVFVERPKAFPMDDRATVANMSTEMGADALMFIPDEVTADYLQRERGVSYKPPSLEPGRYVDRYEVELQRLEPLVAAPYSVDNVKAAREVEGVEVDQVFIGSCTNGRLSDFEVAARVLKRGRAKARCIAIPASYAVFRRAMELGYIDVLTKAGCVVTYGTCGPCLGGHFGVAGPGEVVVTTSNRNFKGRVGHPDSKVYLANPATAAAAALEGKIVDPRPYLAP.

C295, C353, and C356 together coordinate [4Fe-4S] cluster.

Belongs to the aconitase/IPM isomerase family. LeuC type 2 subfamily. In terms of assembly, heterodimer of LeuC and LeuD. Requires [4Fe-4S] cluster as cofactor.

The catalysed reaction is (2R,3S)-3-isopropylmalate = (2S)-2-isopropylmalate. The protein operates within amino-acid biosynthesis; L-leucine biosynthesis; L-leucine from 3-methyl-2-oxobutanoate: step 2/4. In terms of biological role, catalyzes the isomerization between 2-isopropylmalate and 3-isopropylmalate, via the formation of 2-isopropylmaleate. In Pyrobaculum neutrophilum (strain DSM 2338 / JCM 9278 / NBRC 100436 / V24Sta) (Thermoproteus neutrophilus), this protein is 3-isopropylmalate dehydratase large subunit.